Reading from the N-terminus, the 343-residue chain is UDP-3-O-(3-hydroxymyristoyl)glucosamine N-acyltransferase (343 aa).

Histidine 239 functions as the Proton acceptor in the catalytic mechanism.

This sequence belongs to the transferase hexapeptide repeat family. LpxD subfamily. Homotrimer.

The catalysed reaction is a UDP-3-O-[(3R)-3-hydroxyacyl]-alpha-D-glucosamine + a (3R)-hydroxyacyl-[ACP] = a UDP-2-N,3-O-bis[(3R)-3-hydroxyacyl]-alpha-D-glucosamine + holo-[ACP] + H(+). The enzyme catalyses UDP-3-O-[(3R)-3-hydroxytetradecanoyl]-alpha-D-glucosamine + (3R)-hydroxytetradecanoyl-[ACP] = UDP-2-N,3-O-bis[(3R)-3-hydroxytetradecanoyl]-alpha-D-glucosamine + holo-[ACP] + H(+). It functions in the pathway glycolipid biosynthesis; lipid IV(A) biosynthesis; lipid IV(A) from (3R)-3-hydroxytetradecanoyl-[acyl-carrier-protein] and UDP-N-acetyl-alpha-D-glucosamine: step 3/6. Functionally, catalyzes the N-acylation of UDP-3-O-(hydroxytetradecanoyl)glucosamine using 3-hydroxytetradecanoyl-ACP as the acyl donor. Is involved in the biosynthesis of lipid A, a phosphorylated glycolipid that anchors the lipopolysaccharide to the outer membrane of the cell. The protein is UDP-3-O-(3-hydroxymyristoyl)glucosamine N-acyltransferase of Blochmanniella pennsylvanica (strain BPEN).